The chain runs to 216 residues: Thymidylate kinase (216 aa).

9–16 (GIEGSGKT) serves as a coordination point for ATP.

This sequence belongs to the thymidylate kinase family.

The enzyme catalyses dTMP + ATP = dTDP + ADP. Its function is as follows. Phosphorylation of dTMP to form dTDP in both de novo and salvage pathways of dTTP synthesis. The polypeptide is Thymidylate kinase (Syntrophotalea carbinolica (strain DSM 2380 / NBRC 103641 / GraBd1) (Pelobacter carbinolicus)).